The following is a 238-amino-acid chain: Acyl-protein thioesterase 1 (238 aa).

Catalysis depends on charge relay system residues Ser120, Asp174, and His219.

Belongs to the AB hydrolase superfamily. AB hydrolase 2 family.

The protein localises to the cytoplasm. It localises to the nucleus. The enzyme catalyses S-hexadecanoyl-L-cysteinyl-[protein] + H2O = L-cysteinyl-[protein] + hexadecanoate + H(+). Functionally, hydrolyzes fatty acids from S-acylated cysteine residues in proteins with a strong preference for palmitoylated G-alpha proteins over other acyl substrates. Mediates the deacylation of G-alpha proteins such as GPA1 in vivo, but has weak or no activity toward palmitoylated Ras proteins. Has weak lysophospholipase activity in vitro; however such activity may not exist in vivo. This chain is Acyl-protein thioesterase 1, found in Cryptococcus neoformans var. neoformans serotype D (strain B-3501A) (Filobasidiella neoformans).